We begin with the raw amino-acid sequence, 523 residues long: 3-hydroxybenzoate--CoA/4-hydroxybenzoate--CoA ligase (523 aa).

It belongs to the ATP-dependent AMP-binding enzyme family. Benzoate-CoA ligase subfamily.

It carries out the reaction 4-hydroxybenzoate + ATP + CoA = 4-hydroxybenzoyl-CoA + AMP + diphosphate. It catalyses the reaction 3-hydroxybenzoate + ATP + CoA = 3-hydroxybenzoyl-CoA + AMP + diphosphate. Its function is as follows. Catalyzes the ligation of 3-hydroxybenzoate or 4-hydroxybenzoate and CoA at the expense of ATP. The enzyme shows low activity towards benzoate, 4-aminobenzoate, 3-aminobenzoate, 3-fluorobenzoate, 4-fluorobenzoate, 3-chlorobenzoate, and 4-chlorobenzoate. There is no activity with 3,4-dihydroxybenzoate, 2,3-dihydroxybenzoate, and 2-hydroxybenzoate as substrates. This Thauera aromatica protein is 3-hydroxybenzoate--CoA/4-hydroxybenzoate--CoA ligase (hcl).